The primary structure comprises 85 residues: Translation initiation factor IF-1 2 (85 aa).

The region spanning 1 to 72 (MAKEELIEMH…SKGRITFRHI (72 aa)) is the S1-like domain.

The protein belongs to the IF-1 family. In terms of assembly, component of the 30S ribosomal translation pre-initiation complex which assembles on the 30S ribosome in the order IF-2 and IF-3, IF-1 and N-formylmethionyl-tRNA(fMet); mRNA recruitment can occur at any time during PIC assembly.

It localises to the cytoplasm. Its function is as follows. One of the essential components for the initiation of protein synthesis. Stabilizes the binding of IF-2 and IF-3 on the 30S subunit to which N-formylmethionyl-tRNA(fMet) subsequently binds. Helps modulate mRNA selection, yielding the 30S pre-initiation complex (PIC). Upon addition of the 50S ribosomal subunit IF-1, IF-2 and IF-3 are released leaving the mature 70S translation initiation complex. The protein is Translation initiation factor IF-1 2 of Polaromonas sp. (strain JS666 / ATCC BAA-500).